The sequence spans 474 residues: Eukaryotic translation initiation factor 3 subunit L (474 aa).

A PCI domain is found at 255–449 (DAIRMFSHIL…DLDYALQGDL (195 aa)).

Belongs to the eIF-3 subunit L family. Component of the eukaryotic translation initiation factor 3 (eIF-3) complex.

Its subcellular location is the cytoplasm. Component of the eukaryotic translation initiation factor 3 (eIF-3) complex, which is involved in protein synthesis of a specialized repertoire of mRNAs and, together with other initiation factors, stimulates binding of mRNA and methionyl-tRNAi to the 40S ribosome. The eIF-3 complex specifically targets and initiates translation of a subset of mRNAs involved in cell proliferation. The sequence is that of Eukaryotic translation initiation factor 3 subunit L from Chaetomium globosum (strain ATCC 6205 / CBS 148.51 / DSM 1962 / NBRC 6347 / NRRL 1970) (Soil fungus).